The following is a 3083-amino-acid chain: Genome polyprotein (3083 aa).

Positions 173-313 (IVCVDDVNNL…VLFYSDVEHY (141 aa)) constitute a Peptidase S30 domain. The For P1 proteinase activity role is filled by serine 267. The Involved in interaction with stylet and aphid transmission motif lies at 365–368 (KLSC). Positions 621–623 (PTK) match the Involved in virions binding and aphid transmission motif. In terms of domain architecture, Peptidase C6 spans 647–769 (MYIAKEGYCY…QSEMKHYRVG (123 aa)). Catalysis depends on for helper component proteinase activity residues cysteine 655 and histidine 728. The Helicase ATP-binding domain occupies 1239-1391 (EIASSSEGEF…TQFAVKVKTE (153 aa)). 1252–1259 (GAVGSGKS) serves as a coordination point for ATP. The DECH box motif lies at 1341–1344 (DECH). In terms of domain architecture, Helicase C-terminal spans 1410–1569 (DMVQHGNNIL…GLSVTTHGVS (160 aa)). Residues 1894 to 1903 (KRGKVKGNNS) carry the Nuclear localization signal motif. Position 1918 is an O-(5'-phospho-RNA)-tyrosine (tyrosine 1918). One can recognise a Peptidase C4 domain in the interval 2045-2263 (SKSIYKGVRD…IAWGSLNLVD (219 aa)). Residues histidine 2090, aspartate 2125, and cysteine 2195 each act as for nuclear inclusion protein A activity in the active site. Positions 2529–2653 (WLYCHADGSQ…AVKDEDSGLL (125 aa)) constitute a RdRp catalytic domain. A disordered region spans residues 2808-2855 (QTREAGAGASKKDKDEDKDKKKDVASSSASEKAVATATKDKDVNAGSH). Basic and acidic residues predominate over residues 2817–2831 (SKKDKDEDKDKKKDV). The span at 2832–2844 (ASSSASEKAVATA) shows a compositional bias: low complexity. The residue at position 3065 (threonine 3065) is a Phosphothreonine.

The protein belongs to the potyviridae genome polyprotein family. Interacts with host eIF4E protein (via cap-binding region); this interaction mediates the translation of the VPg-viral RNA conjugates. Part of a complex that comprises VPg, RNA, host EIF4E and EIF4G; this interaction mediates the translation of the VPg-viral RNA conjugates. VPg is uridylylated by the polymerase and is covalently attached to the 5'-end of the genomic RNA. This uridylylated form acts as a nucleotide-peptide primer for the polymerase. Post-translationally, potyviral RNA is expressed as two polyproteins which undergo post-translational proteolytic processing. Genome polyprotein is processed by NIa-pro, P1 and HC-pro proteinases resulting in the production of at least ten individual proteins. P3N-PIPO polyprotein is cleaved by P1 and HC-pro proteinases resulting in the production of three individual proteins. The P1 proteinase and the HC-pro cleave only their respective C-termini autocatalytically. 6K1 is essential for proper proteolytic separation of P3 from CI.

The protein localises to the host cytoplasmic vesicle. It localises to the host nucleus. Its subcellular location is the virion. The enzyme catalyses RNA(n) + a ribonucleoside 5'-triphosphate = RNA(n+1) + diphosphate. It carries out the reaction Hydrolyzes glutaminyl bonds, and activity is further restricted by preferences for the amino acids in P6 - P1' that vary with the species of potyvirus, e.g. Glu-Xaa-Xaa-Tyr-Xaa-Gln-|-(Ser or Gly) for the enzyme from tobacco etch virus. The natural substrate is the viral polyprotein, but other proteins and oligopeptides containing the appropriate consensus sequence are also cleaved.. It catalyses the reaction Hydrolyzes a Gly-|-Gly bond at its own C-terminus, commonly in the sequence -Tyr-Xaa-Val-Gly-|-Gly, in the processing of the potyviral polyprotein.. Required for aphid transmission and also has proteolytic activity. Only cleaves a Gly-Gly dipeptide at its own C-terminus. Interacts with virions and aphid stylets. Acts as a suppressor of RNA-mediated gene silencing, also known as post-transcriptional gene silencing (PTGS), a mechanism of plant viral defense that limits the accumulation of viral RNAs. May have RNA-binding activity. Its function is as follows. Has helicase activity. It may be involved in replication. In terms of biological role, indispensable for virus replication. Reduces the abundance of host transcripts related to jasmonic acid biosynthesis therefore altering the host defenses. In order to increase its own stability, decreases host protein degradation pathways. Functionally, indispensable for virus replication. Mediates the cap-independent, EIF4E-dependent translation of viral genomic RNAs. Binds to the cap-binding site of host EIF4E and thus interferes with the host EIF4E-dependent mRNA export and translation. VPg-RNA directly binds EIF4E and is a template for transcription. Also forms trimeric complexes with EIF4E-EIF4G, which are templates for translation. Its function is as follows. Has RNA-binding and proteolytic activities. In terms of biological role, an RNA-dependent RNA polymerase that plays an essential role in the virus replication. Functionally, involved in aphid transmission, cell-to-cell and systemis movement, encapsidation of the viral RNA and in the regulation of viral RNA amplification. The polypeptide is Genome polyprotein (Zucchini yellow mosaic virus (strain Singapore) (ZYMV)).